Here is a 471-residue protein sequence, read N- to C-terminus: Argininosuccinate lyase (471 aa).

Belongs to the lyase 1 family. Argininosuccinate lyase subfamily.

The protein resides in the cytoplasm. It carries out the reaction 2-(N(omega)-L-arginino)succinate = fumarate + L-arginine. The protein operates within amino-acid biosynthesis; L-arginine biosynthesis; L-arginine from L-ornithine and carbamoyl phosphate: step 3/3. The protein is Argininosuccinate lyase of Ralstonia nicotianae (strain ATCC BAA-1114 / GMI1000) (Ralstonia solanacearum).